A 308-amino-acid chain; its full sequence is Coenzyme PQQ synthesis protein B (308 aa).

The protein belongs to the PqqB family.

The protein operates within cofactor biosynthesis; pyrroloquinoline quinone biosynthesis. May be involved in the transport of PQQ or its precursor to the periplasm. This is Coenzyme PQQ synthesis protein B from Rhodopseudomonas palustris (strain TIE-1).